Here is a 199-residue protein sequence, read N- to C-terminus: Peptidyl-tRNA hydrolase (199 aa).

Tyr-15 is a tRNA binding site. His-20 (proton acceptor) is an active-site residue. TRNA is bound by residues Tyr-66, Asn-68, and Asn-114.

This sequence belongs to the PTH family. As to quaternary structure, monomer.

The protein localises to the cytoplasm. It catalyses the reaction an N-acyl-L-alpha-aminoacyl-tRNA + H2O = an N-acyl-L-amino acid + a tRNA + H(+). Its function is as follows. Hydrolyzes ribosome-free peptidyl-tRNAs (with 1 or more amino acids incorporated), which drop off the ribosome during protein synthesis, or as a result of ribosome stalling. In terms of biological role, catalyzes the release of premature peptidyl moieties from peptidyl-tRNA molecules trapped in stalled 50S ribosomal subunits, and thus maintains levels of free tRNAs and 50S ribosomes. The polypeptide is Peptidyl-tRNA hydrolase (Burkholderia ambifaria (strain MC40-6)).